The following is a 384-amino-acid chain: Dehydrogenase ALT3 (384 aa).

The protein belongs to the iron-containing alcohol dehydrogenase family. It depends on Fe cation as a cofactor.

It participates in mycotoxin biosynthesis. Functionally, dehydrogenase; part of the gene cluster that mediates the biosynthesis of the host-selective toxins (HSTs) AAL-toxins, sphinganine-analog mycotoxins responsible for Alternaria stem canker on tomato by the tomato pathotype. The biosynthesis starts with the polyketide synthase ALT1-catalyzed C-16 carbon chain assembly from one starter acetyl-CoA unit with malonyl-CoA extender units. ALT1 also selectively transfers methyl groups at the first and the third cycle of chain elongation for AAL toxin. The C-16 polyketide chain is released from the enzyme by a nucleophilic attack of a carbanion, which is derived from R-carbon of glycin by decarboxylation, on the carbonyl carbon of polyketide acyl chain. This step is probably catalyzed by a pyridoxal 5'-phosphate-dependent aminoacyl transferase ALT4. The respective functions of the other enzymes encoded by the cluster have still to be elucidated. The sphingosine N-acyltransferase-like protein ALT7 seems not to act as a resistance/self-tolerance factor against the toxin in the toxin biosynthetic gene cluster, contrary to what is expected. This Alternaria alternata (Alternaria rot fungus) protein is Dehydrogenase ALT3.